Reading from the N-terminus, the 180-residue chain is Crossover junction endodeoxyribonuclease RuvC (180 aa).

Residues Asp7, Glu66, and Asp138 contribute to the active site. 3 residues coordinate Mg(2+): Asp7, Glu66, and Asp138.

The protein belongs to the RuvC family. As to quaternary structure, homodimer which binds Holliday junction (HJ) DNA. The HJ becomes 2-fold symmetrical on binding to RuvC with unstacked arms; it has a different conformation from HJ DNA in complex with RuvA. In the full resolvosome a probable DNA-RuvA(4)-RuvB(12)-RuvC(2) complex forms which resolves the HJ. It depends on Mg(2+) as a cofactor.

It is found in the cytoplasm. The enzyme catalyses Endonucleolytic cleavage at a junction such as a reciprocal single-stranded crossover between two homologous DNA duplexes (Holliday junction).. The RuvA-RuvB-RuvC complex processes Holliday junction (HJ) DNA during genetic recombination and DNA repair. Endonuclease that resolves HJ intermediates. Cleaves cruciform DNA by making single-stranded nicks across the HJ at symmetrical positions within the homologous arms, yielding a 5'-phosphate and a 3'-hydroxyl group; requires a central core of homology in the junction. The consensus cleavage sequence is 5'-(A/T)TT(C/G)-3'. Cleavage occurs on the 3'-side of the TT dinucleotide at the point of strand exchange. HJ branch migration catalyzed by RuvA-RuvB allows RuvC to scan DNA until it finds its consensus sequence, where it cleaves and resolves the cruciform DNA. This is Crossover junction endodeoxyribonuclease RuvC from Paraburkholderia phytofirmans (strain DSM 17436 / LMG 22146 / PsJN) (Burkholderia phytofirmans).